Here is a 134-residue protein sequence, read N- to C-terminus: Holo-[acyl-carrier-protein] synthase (134 aa).

Mg(2+) is bound by residues Asp8 and Glu57.

It belongs to the P-Pant transferase superfamily. AcpS family. Requires Mg(2+) as cofactor.

It localises to the cytoplasm. It catalyses the reaction apo-[ACP] + CoA = holo-[ACP] + adenosine 3',5'-bisphosphate + H(+). Its function is as follows. Transfers the 4'-phosphopantetheine moiety from coenzyme A to a Ser of acyl-carrier-protein. The sequence is that of Holo-[acyl-carrier-protein] synthase from Agrobacterium fabrum (strain C58 / ATCC 33970) (Agrobacterium tumefaciens (strain C58)).